Here is a 265-residue protein sequence, read N- to C-terminus: Anaphase-promoting complex subunit 9 (265 aa).

The APC/C is composed of at least 13 subunits that stay tightly associated throughout the cell cycle: APC1, APC2, APC4, APC5, APC9, APC11, CDC16, CDC23, CDC26, CDC27, DOC1, MND2 and SWM1.

Its subcellular location is the cytoplasm. It is found in the nucleus. The protein operates within protein modification; protein ubiquitination. In terms of biological role, component of the anaphase promoting complex/cyclosome (APC/C), a cell cycle-regulated E3 ubiquitin-protein ligase complex that controls progression through mitosis and the G1 phase of the cell cycle. The APC/C is thought to confer substrate specificity and, in the presence of ubiquitin-conjugating E2 enzymes, it catalyzes the formation of protein-ubiquitin conjugates that are subsequently degraded by the 26S proteasome. In early mitosis, the APC/C is activated by CDC20 and targets securin PDS1, the B-type cyclin CLB5, and other anaphase inhibitory proteins for proteolysis, thereby triggering the separation of sister chromatids at the metaphase-to-anaphase transition. In late mitosis and in G1, degradation of CLB5 allows activation of the APC/C by CDH1, which is needed to destroy CDC20 and the B-type cyclin CLB2 to allow exit from mitosis and creating the low CDK state necessary for cytokinesis and for reforming prereplicative complexes in G1 prior to another round of replication. In Saccharomyces cerevisiae (strain ATCC 204508 / S288c) (Baker's yeast), this protein is Anaphase-promoting complex subunit 9 (APC9).